We begin with the raw amino-acid sequence, 337 residues long: RNA 3'-terminal phosphate cyclase (337 aa).

ATP contacts are provided by residues Gln-101 and 282-285 (HMSD). Catalysis depends on His-306, which acts as the Tele-AMP-histidine intermediate.

Belongs to the RNA 3'-terminal cyclase family. Type 1 subfamily.

It is found in the cytoplasm. It carries out the reaction a 3'-end 3'-phospho-ribonucleotide-RNA + ATP = a 3'-end 2',3'-cyclophospho-ribonucleotide-RNA + AMP + diphosphate. In terms of biological role, catalyzes the conversion of 3'-phosphate to a 2',3'-cyclic phosphodiester at the end of RNA. The mechanism of action of the enzyme occurs in 3 steps: (A) adenylation of the enzyme by ATP; (B) transfer of adenylate to an RNA-N3'P to produce RNA-N3'PP5'A; (C) and attack of the adjacent 2'-hydroxyl on the 3'-phosphorus in the diester linkage to produce the cyclic end product. The biological role of this enzyme is unknown but it is likely to function in some aspects of cellular RNA processing. In Saccharolobus islandicus (strain M.16.27) (Sulfolobus islandicus), this protein is RNA 3'-terminal phosphate cyclase.